A 338-amino-acid polypeptide reads, in one-letter code: Phenylalanine--tRNA ligase alpha subunit (338 aa).

Glu252 serves as a coordination point for Mg(2+).

The protein belongs to the class-II aminoacyl-tRNA synthetase family. Phe-tRNA synthetase alpha subunit type 1 subfamily. As to quaternary structure, tetramer of two alpha and two beta subunits. Requires Mg(2+) as cofactor.

The protein resides in the cytoplasm. It carries out the reaction tRNA(Phe) + L-phenylalanine + ATP = L-phenylalanyl-tRNA(Phe) + AMP + diphosphate + H(+). This chain is Phenylalanine--tRNA ligase alpha subunit, found in Pseudomonas syringae pv. tomato (strain ATCC BAA-871 / DC3000).